The chain runs to 664 residues: DNA ligase (664 aa).

NAD(+)-binding positions include 32–36 (DKEYD) and 80–81 (SL). Lys-122 acts as the N6-AMP-lysine intermediate in catalysis. Positions 144, 178, and 314 each coordinate NAD(+). Residues Cys-407, Cys-410, Cys-423, and Cys-429 each coordinate Zn(2+). Positions 587–664 (IDENPFMGKT…NEEEFSNKIK (78 aa)) constitute a BRCT domain.

The protein belongs to the NAD-dependent DNA ligase family. LigA subfamily. It depends on Mg(2+) as a cofactor. Mn(2+) serves as cofactor.

The enzyme catalyses NAD(+) + (deoxyribonucleotide)n-3'-hydroxyl + 5'-phospho-(deoxyribonucleotide)m = (deoxyribonucleotide)n+m + AMP + beta-nicotinamide D-nucleotide.. In terms of biological role, DNA ligase that catalyzes the formation of phosphodiester linkages between 5'-phosphoryl and 3'-hydroxyl groups in double-stranded DNA using NAD as a coenzyme and as the energy source for the reaction. It is essential for DNA replication and repair of damaged DNA. The sequence is that of DNA ligase from Clostridium botulinum (strain Kyoto / Type A2).